The sequence spans 102 residues: Small ribosomal subunit protein uS10 (102 aa).

It belongs to the universal ribosomal protein uS10 family. In terms of assembly, part of the 30S ribosomal subunit.

Functionally, involved in the binding of tRNA to the ribosomes. The chain is Small ribosomal subunit protein uS10 from Roseiflexus sp. (strain RS-1).